We begin with the raw amino-acid sequence, 440 residues long: Xaa-Pro dipeptidase (440 aa).

Mn(2+) contacts are provided by Asp-244, Asp-255, His-335, Glu-380, and Glu-419.

Belongs to the peptidase M24B family. Bacterial-type prolidase subfamily. Mn(2+) is required as a cofactor.

The enzyme catalyses Xaa-L-Pro dipeptide + H2O = an L-alpha-amino acid + L-proline. Functionally, splits dipeptides with a prolyl residue in the C-terminal position. The polypeptide is Xaa-Pro dipeptidase (Shewanella pealeana (strain ATCC 700345 / ANG-SQ1)).